Reading from the N-terminus, the 355-residue chain is (R,S)-reticuline 7-O-methyltransferase (355 aa).

S-adenosyl-L-methionine is bound by residues 197–200 (VGGG), D221, 221–222 (DL), 241–242 (DM), and K255. The Proton acceptor role is filled by H259.

The protein belongs to the class I-like SAM-binding methyltransferase superfamily. Cation-independent O-methyltransferase family. Homodimer. In terms of tissue distribution, expressed in capsules, buds and stems, and at lower levels in leaves. Localized to parenchyma cells within the vascular bundle, but only to those cells distal to laticifers. In roots, found in the pericycle within the stele.

The enzyme catalyses (S)-reticuline + S-adenosyl-L-methionine = (S)-laudanine + S-adenosyl-L-homocysteine + H(+). It catalyses the reaction (R)-reticuline + S-adenosyl-L-methionine = (R)-laudanine + S-adenosyl-L-homocysteine + H(+). In terms of biological role, catalyzes the transfer of a methyl group to reticuline to form laudanine. Methylates the simple catechols guaiacol and isovanillic acid as well as the tetrahydrobenzylisoquinolines (R)-reticuline, (S)-reticuline, (R,S)-orientaline, (R)-protosinomenine and (R,S)-isoorientaline. Involved in the production of laudanine. The protein is (R,S)-reticuline 7-O-methyltransferase of Papaver somniferum (Opium poppy).